Consider the following 391-residue polypeptide: Flagellin (391 aa).

The protein belongs to the bacterial flagellin family.

The protein localises to the secreted. The protein resides in the bacterial flagellum. Functionally, flagellin is the subunit protein which polymerizes to form the filaments of bacterial flagella. This is Flagellin (flaA) from Bordetella bronchiseptica (strain ATCC BAA-588 / NCTC 13252 / RB50) (Alcaligenes bronchisepticus).